The following is a 96-amino-acid chain: Large ribosomal subunit protein eL14 (96 aa).

Belongs to the eukaryotic ribosomal protein eL14 family.

This Saccharolobus solfataricus (strain ATCC 35092 / DSM 1617 / JCM 11322 / P2) (Sulfolobus solfataricus) protein is Large ribosomal subunit protein eL14.